A 438-amino-acid polypeptide reads, in one-letter code: 3-phosphoshikimate 1-carboxyvinyltransferase (438 aa).

3-phosphoshikimate is bound by residues K20, S21, and R25. K20 contacts phosphoenolpyruvate. Phosphoenolpyruvate-binding residues include G90 and R118. S163, S164, Q165, S191, D320, and K347 together coordinate 3-phosphoshikimate. Residue Q165 coordinates phosphoenolpyruvate. D320 acts as the Proton acceptor in catalysis. Residues R351 and R392 each contribute to the phosphoenolpyruvate site.

It belongs to the EPSP synthase family. In terms of assembly, monomer.

Its subcellular location is the cytoplasm. The catalysed reaction is 3-phosphoshikimate + phosphoenolpyruvate = 5-O-(1-carboxyvinyl)-3-phosphoshikimate + phosphate. It functions in the pathway metabolic intermediate biosynthesis; chorismate biosynthesis. Functionally, catalyzes the transfer of the enolpyruvyl moiety of phosphoenolpyruvate (PEP) to the 5-hydroxyl of shikimate-3-phosphate (S3P) to produce enolpyruvyl shikimate-3-phosphate and inorganic phosphate. The polypeptide is 3-phosphoshikimate 1-carboxyvinyltransferase (Natronomonas pharaonis (strain ATCC 35678 / DSM 2160 / CIP 103997 / JCM 8858 / NBRC 14720 / NCIMB 2260 / Gabara) (Halobacterium pharaonis)).